Reading from the N-terminus, the 1015-residue chain is Putative helicase mov-10-B.2 (1015 aa).

Positions 94–130 (QWFRPRRRQQNQANATPGNVSSVTPSSDQGPSCPESG) are disordered. Over residues 109 to 123 (TPGNVSSVTPSSDQG) the composition is skewed to polar residues. 555-562 (GPPGTGKT) is an ATP binding site. Positions 677 to 680 (DEAG) match the DEAG box motif.

This sequence belongs to the DNA2/NAM7 helicase family. SDE3 subfamily.

It localises to the cytoplasm. It is found in the P-body. The catalysed reaction is ATP + H2O = ADP + phosphate + H(+). Probable RNA helicase. Required for RNA-mediated gene silencing by the RNA-induced silencing complex (RISC). Required for both miRNA-mediated translational repression and miRNA-mediated cleavage of complementary mRNAs by RISC. The protein is Putative helicase mov-10-B.2 (mov10b.2) of Danio rerio (Zebrafish).